Consider the following 734-residue polypeptide: Mechanosensitive ion channel protein 10 (734 aa).

Disordered stretches follow at residues 1-75 (MAEQ…LTQR) and 115-136 (SFSR…APVT). The span at 24 to 39 (EASRRSKEMASPESEK) shows a compositional bias: basic and acidic residues. Position 34 is a phosphoserine (Ser-34). Composition is skewed to polar residues over residues 65–75 (PNQNNVGLTQR) and 117–129 (SRAS…NRSV). Residues Ser-128 and Ser-131 each carry the phosphoserine modification. 6 helical membrane passes run 164 to 184 (ISTL…ALVA), 196 to 216 (FWGL…SGML), 249 to 269 (SVQV…LFNH), 288 to 308 (LISI…LKIL), 516 to 536 (LVTA…LEVA), and 551 to 571 (LAFI…FVFV).

The protein belongs to the MscS (TC 1.A.23) family. Detected in the root tip and throughout the vasculature of the root and leaf.

The protein localises to the cell membrane. Functionally, mechanosensitive channel that opens in response to stretch forces in the membrane lipid bilayer. This is Mechanosensitive ion channel protein 10 (MSL10) from Arabidopsis thaliana (Mouse-ear cress).